The chain runs to 309 residues: MIKLKSILNFLYNIANKDGFKGYKECRTSAYKNVFDDSSTKSTSKFHLGISDTKNLLSLQNIIGLILIIFAGVLFYAYILQHEWRYVTLSDAQVKRYRISEKKALSLYQLMKDTHELLTKNNIKYWIESGTLLGAVRHQGIIPFDDDLDIGIMHEDEIHFQQILPQFKQLGYRIKHNKIYVICGERCLDIFIFHKEKDKFVHILYDQYPNDFFYENELYPLKKYKFGNIEVYGPFDPIGNLNRQYPEWDKYAIIYSPHSFHLLFLSNIEKKTKFILTPELLKPAQPFGPLKDKVNIVNSANIYNDMDYH.

The 47-residue stretch at 9–55 folds into the RPE1 insert domain; that stretch reads NFLYNIANKDGFKGYKECRTSAYKNVFDDSSTKSTSKFHLGISDTKN. Residues 62-82 traverse the membrane as a helical segment; sequence IIGLILIIFAGVLFYAYILQH.

The protein belongs to the LicD transferase family.

The protein localises to the membrane. This is an uncharacterized protein from Rickettsia typhi (strain ATCC VR-144 / Wilmington).